Here is a 236-residue protein sequence, read N- to C-terminus: Predicted GPI-anchored protein 43 (236 aa).

The N-terminal stretch at 1–24 (MHQRNHHSILLTLLLYLQSIVALA) is a signal peptide. N-linked (GlcNAc...) asparagine glycans are attached at residues asparagine 192, asparagine 195, and asparagine 198. Glycine 208 carries GPI-anchor amidated glycine lipidation. The propeptide at 209-236 (SVCLTSSYLNSPIIILCAILTGTLFAMY) is removed in mature form.

It is found in the cell membrane. This chain is Predicted GPI-anchored protein 43 (PGA43), found in Candida albicans (strain SC5314 / ATCC MYA-2876) (Yeast).